The following is a 101-amino-acid chain: NAD(P)H-quinone oxidoreductase subunit 4L (101 aa).

The next 3 membrane-spanning stretches (helical) occupy residues 3 to 23 (LRYFLLLAAALFCIGIYGLIT), 30 to 50 (VLMSIELLLNAVNLNLMAFSN), and 64 to 84 (VFVITVAAAEAAVGLAIVLAI).

This sequence belongs to the complex I subunit 4L family. NDH-1 can be composed of about 15 different subunits; different subcomplexes with different compositions have been identified which probably have different functions.

The protein localises to the cellular thylakoid membrane. It carries out the reaction a plastoquinone + NADH + (n+1) H(+)(in) = a plastoquinol + NAD(+) + n H(+)(out). The catalysed reaction is a plastoquinone + NADPH + (n+1) H(+)(in) = a plastoquinol + NADP(+) + n H(+)(out). In terms of biological role, NDH-1 shuttles electrons from an unknown electron donor, via FMN and iron-sulfur (Fe-S) centers, to quinones in the respiratory and/or the photosynthetic chain. The immediate electron acceptor for the enzyme in this species is believed to be plastoquinone. Couples the redox reaction to proton translocation, and thus conserves the redox energy in a proton gradient. Cyanobacterial NDH-1 also plays a role in inorganic carbon-concentration. The sequence is that of NAD(P)H-quinone oxidoreductase subunit 4L from Nostoc sp. (strain PCC 7120 / SAG 25.82 / UTEX 2576).